Reading from the N-terminus, the 205-residue chain is 3-demethoxyubiquinol 3-hydroxylase (205 aa).

Fe cation-binding residues include Glu54, Glu84, His87, Glu136, Glu168, and His171.

It belongs to the COQ7 family. The cofactor is Fe cation.

It localises to the cell membrane. It catalyses the reaction a 5-methoxy-2-methyl-3-(all-trans-polyprenyl)benzene-1,4-diol + AH2 + O2 = a 3-demethylubiquinol + A + H2O. It functions in the pathway cofactor biosynthesis; ubiquinone biosynthesis. In terms of biological role, catalyzes the hydroxylation of 2-nonaprenyl-3-methyl-6-methoxy-1,4-benzoquinol during ubiquinone biosynthesis. The chain is 3-demethoxyubiquinol 3-hydroxylase from Acidovorax sp. (strain JS42).